Reading from the N-terminus, the 367-residue chain is Phosphoribosylaminoimidazole-succinocarboxamide synthase (367 aa).

It belongs to the SAICAR synthetase family.

The catalysed reaction is 5-amino-1-(5-phospho-D-ribosyl)imidazole-4-carboxylate + L-aspartate + ATP = (2S)-2-[5-amino-1-(5-phospho-beta-D-ribosyl)imidazole-4-carboxamido]succinate + ADP + phosphate + 2 H(+). The protein operates within purine metabolism; IMP biosynthesis via de novo pathway; 5-amino-1-(5-phospho-D-ribosyl)imidazole-4-carboxamide from 5-amino-1-(5-phospho-D-ribosyl)imidazole-4-carboxylate: step 1/2. In Shewanella amazonensis (strain ATCC BAA-1098 / SB2B), this protein is Phosphoribosylaminoimidazole-succinocarboxamide synthase.